An 81-amino-acid chain; its full sequence is Photosystem I iron-sulfur center (81 aa).

4Fe-4S ferredoxin-type domains are found at residues 2-31 and 39-68; these read SHSV…MIPW and IASA…VRVY. The [4Fe-4S] cluster site is built by Cys11, Cys14, Cys17, Cys21, Cys48, Cys51, Cys54, and Cys58.

In terms of assembly, the eukaryotic PSI reaction center is composed of at least 11 subunits. Requires [4Fe-4S] cluster as cofactor.

The protein localises to the plastid. The protein resides in the chloroplast thylakoid membrane. It carries out the reaction reduced [plastocyanin] + hnu + oxidized [2Fe-2S]-[ferredoxin] = oxidized [plastocyanin] + reduced [2Fe-2S]-[ferredoxin]. In terms of biological role, apoprotein for the two 4Fe-4S centers FA and FB of photosystem I (PSI); essential for photochemical activity. FB is the terminal electron acceptor of PSI, donating electrons to ferredoxin. The C-terminus interacts with PsaA/B/D and helps assemble the protein into the PSI complex. Required for binding of PsaD and PsaE to PSI. PSI is a plastocyanin-ferredoxin oxidoreductase, converting photonic excitation into a charge separation, which transfers an electron from the donor P700 chlorophyll pair to the spectroscopically characterized acceptors A0, A1, FX, FA and FB in turn. This Vitis vinifera (Grape) protein is Photosystem I iron-sulfur center.